We begin with the raw amino-acid sequence, 221 residues long: Adenylate kinase (221 aa).

10-15 (GAGKGT) contacts ATP. The interval 30–59 (STGDIFRQNLRDNTELGKLAKEYMDKGLLV) is NMP. AMP-binding positions include threonine 31, arginine 36, 57 to 59 (LLV), 85 to 88 (GYPR), and glutamine 92. Residues 126 to 163 (GRRVCPVCGATYHIKTSPPKVDNVCDKCGSELIQRSDD) are LID. Position 127 (arginine 127) interacts with ATP. Zn(2+) is bound by residues cysteine 130 and cysteine 133. 136–137 (TY) is a binding site for ATP. Zn(2+)-binding residues include cysteine 150 and cysteine 153. Positions 160 and 171 each coordinate AMP. Lysine 199 serves as a coordination point for ATP.

It belongs to the adenylate kinase family. In terms of assembly, monomer.

The protein localises to the cytoplasm. The enzyme catalyses AMP + ATP = 2 ADP. The protein operates within purine metabolism; AMP biosynthesis via salvage pathway; AMP from ADP: step 1/1. Catalyzes the reversible transfer of the terminal phosphate group between ATP and AMP. Plays an important role in cellular energy homeostasis and in adenine nucleotide metabolism. This Caldanaerobacter subterraneus subsp. tengcongensis (strain DSM 15242 / JCM 11007 / NBRC 100824 / MB4) (Thermoanaerobacter tengcongensis) protein is Adenylate kinase.